The primary structure comprises 89 residues: Small ribosomal subunit protein bS20 (89 aa).

It belongs to the bacterial ribosomal protein bS20 family.

Functionally, binds directly to 16S ribosomal RNA. The protein is Small ribosomal subunit protein bS20 of Helicobacter pylori (strain Shi470).